The chain runs to 169 residues: Putative hydrolase 111R (169 aa).

One can recognise a Nudix hydrolase domain in the interval 46-169 (FEKRKAGVFV…QKILMALSCN (124 aa)). The short motif at 76–98 (GHMEAYDHSPKTCAERELKEETG) is the Nudix box element. Mg(2+) is bound by residues Glu-92, Glu-96, and Asp-138.

The protein belongs to the Nudix hydrolase family. Requires Mg(2+) as cofactor. Mn(2+) is required as a cofactor.

The chain is Putative hydrolase 111R from Aedes vexans (Inland floodwater mosquito).